Reading from the N-terminus, the 273-residue chain is Undecaprenyl-diphosphatase (273 aa).

A run of 7 helical transmembrane segments spans residues 45–65 (AKTFEVVIQLGSILAVVVMFW), 90–110 (LTLIHILLGMVPAVVLGLIFH), 116–136 (LFNPINVMYALVVGGVLLIAA), 154–173 (YRQAFMIGCFQCLALWPGFS), 190–210 (YAASEFSFLLAVPMMMGATAL), 222–242 (ADFPMFAVGFVTAFLVALVAI), and 252–272 (ISFIPFAIYRFIVAAAVYVVF).

The protein belongs to the UppP family.

The protein resides in the cell inner membrane. The enzyme catalyses di-trans,octa-cis-undecaprenyl diphosphate + H2O = di-trans,octa-cis-undecaprenyl phosphate + phosphate + H(+). Functionally, catalyzes the dephosphorylation of undecaprenyl diphosphate (UPP). Confers resistance to bacitracin. The protein is Undecaprenyl-diphosphatase of Enterobacter sp. (strain 638).